The chain runs to 228 residues: Probable endonuclease LCL3 (228 aa).

A helical transmembrane segment spans residues 13 to 30; sequence LLVSAGFTTSLFVGFNLY. The 159-residue stretch at 52–210 folds into the TNase-like domain; sequence RQLYGKVTRV…KLLRRGVWSL (159 aa). Arg-101 is a catalytic residue. Asp-106 lines the Ca(2+) pocket. Active-site residues include Glu-109 and Arg-149.

It belongs to the LCL3 family.

It is found in the mitochondrion. The protein resides in the membrane. The polypeptide is Probable endonuclease LCL3 (LCL3) (Meyerozyma guilliermondii (strain ATCC 6260 / CBS 566 / DSM 6381 / JCM 1539 / NBRC 10279 / NRRL Y-324) (Yeast)).